The sequence spans 396 residues: Probable sugar efflux transporter (396 aa).

A run of 12 helical transmembrane segments spans residues Val-15 to Leu-35, Val-50 to Leu-70, Leu-81 to Phe-101, Val-103 to Ala-123, Ala-136 to Leu-156, Phe-170 to Leu-190, Pro-209 to Tyr-229, Phe-246 to Gly-266, Ala-275 to Ala-295, Ile-299 to Met-319, Val-333 to Gly-353, and Met-364 to Phe-384.

The protein belongs to the major facilitator superfamily. SotB (TC 2.A.1.2) family.

The protein localises to the cell inner membrane. In terms of biological role, involved in the efflux of sugars. The physiological role may be the reduction of the intracellular concentration of toxic sugars or sugar metabolites. This Shigella flexneri serotype 5b (strain 8401) protein is Probable sugar efflux transporter.